Here is a 180-residue protein sequence, read N- to C-terminus: Crossover junction endodeoxyribonuclease RuvC (180 aa).

Active-site residues include D7, E66, and D138. Mg(2+)-binding residues include D7, E66, and D138.

Belongs to the RuvC family. Homodimer which binds Holliday junction (HJ) DNA. The HJ becomes 2-fold symmetrical on binding to RuvC with unstacked arms; it has a different conformation from HJ DNA in complex with RuvA. In the full resolvosome a probable DNA-RuvA(4)-RuvB(12)-RuvC(2) complex forms which resolves the HJ. Requires Mg(2+) as cofactor.

Its subcellular location is the cytoplasm. It carries out the reaction Endonucleolytic cleavage at a junction such as a reciprocal single-stranded crossover between two homologous DNA duplexes (Holliday junction).. Its function is as follows. The RuvA-RuvB-RuvC complex processes Holliday junction (HJ) DNA during genetic recombination and DNA repair. Endonuclease that resolves HJ intermediates. Cleaves cruciform DNA by making single-stranded nicks across the HJ at symmetrical positions within the homologous arms, yielding a 5'-phosphate and a 3'-hydroxyl group; requires a central core of homology in the junction. The consensus cleavage sequence is 5'-(A/T)TT(C/G)-3'. Cleavage occurs on the 3'-side of the TT dinucleotide at the point of strand exchange. HJ branch migration catalyzed by RuvA-RuvB allows RuvC to scan DNA until it finds its consensus sequence, where it cleaves and resolves the cruciform DNA. The protein is Crossover junction endodeoxyribonuclease RuvC of Janthinobacterium sp. (strain Marseille) (Minibacterium massiliensis).